Consider the following 450-residue polypeptide: Putative cysteine--tRNA ligase 2 (450 aa).

The short motif at 29-39 is the 'HIGH' region element; sequence ITPYKSTHLGH. The short motif at 270 to 274 is the 'KMSKS' region element; sequence KMSKS. Lys-273 contacts ATP. A disordered region spans residues 372-392; sequence PIHPKHSPQMRDYSEHGSAGQ.

Belongs to the class-I aminoacyl-tRNA synthetase family. As to quaternary structure, monomer.

It localises to the cytoplasm. It catalyses the reaction tRNA(Cys) + L-cysteine + ATP = L-cysteinyl-tRNA(Cys) + AMP + diphosphate. The protein is Putative cysteine--tRNA ligase 2 (cysS2) of Tropheryma whipplei (strain TW08/27) (Whipple's bacillus).